Consider the following 676-residue polypeptide: Envelope glycoprotein (676 aa).

A signal peptide spans 1–32 (MEGLSLLQLPRDKFRKSSFFVWVIILFQKAFS). The Extracellular portion of the chain corresponds to 33 to 650 (MPLGVVTNST…DDNWWTGWRQ (618 aa)). Asn40 is a glycosylation site (N-linked (GlcNAc...) asparagine; by host). Intrachain disulfides connect Cys53/Cys609, Cys108/Cys135, Cys121/Cys147, Cys511/Cys556, and Cys601/Cys608. The receptor-binding stretch occupies residues 54 to 201 (KDHLASTDQL…TFLQSPPIRE (148 aa)). Residues Asn204, Asn208, Asn238, Asn257, Asn268, Asn296, and Asn314 are each glycosylated (N-linked (GlcNAc...) asparagine; by host). Positions 305–485 (ELSFETLSLN…STSNGLITST (181 aa)) are mucin-like region. The tract at residues 312–351 (SLNETEDDDATSSRTTKGRISDRATRKYSDLVPKDSPGMV) is disordered. Positions 330–344 (RISDRATRKYSDLVP) are enriched in basic and acidic residues. Asn366 carries an N-linked (GlcNAc...) asparagine; by host glycan. The interval 406–458 (SSSQILSSSPTMAPSPETQTSTTYTPKLPVMTTEEPTTPPRNSPGSTTEAPTL) is disordered. 2 stretches are compositionally biased toward polar residues: residues 415–430 (PTMA…TTYT) and 448–458 (SPGSTTEAPTL). N-linked (GlcNAc...) asparagine; by host glycosylation is present at Asn463. Residues 524 to 539 (HNAAGIAWIPYFGPGA) are fusion peptide. Residues 554-595 (LVCGLRQLANETTQALQLFLRATTELRTYTILNRKAIDFLLR) are a coiled coil. Asn563 carries N-linked (GlcNAc...) asparagine; by host glycosylation. A coiled-coil region spans residues 615-634 (WTKNITDKINQIIHDFIDNP). The N-linked (GlcNAc...) asparagine; by host glycan is linked to Asn618. Residues 651 to 671 (WIPAGIGITGIIIAIIALLCV) traverse the membrane as a helical segment. Residues Cys670 and Cys672 are each lipidated (S-palmitoyl cysteine; by host). Residues 672–676 (CKLLC) are Cytoplasmic-facing.

This sequence belongs to the filoviruses glycoprotein family. As to quaternary structure, homotrimer; each monomer consists of a GP1 and a GP2 subunit linked by disulfide bonds. The resulting peplomers (GP1,2) protrude from the virus surface as spikes. Interacts with host integrin alpha-V/ITGAV. Interacts with host CLEC10A. Binds also to host CD209 and CLEC4M/DC-SIGN(R). Interacts with host FOLR1. Interacts with BST2; this interaction inhibits the antiviral effect of BST2 and this allows viral release from infected cells. Interacts with host FCN1; this interaction enhances viral entry. Interacts with host TLR4; this interaction induces cell death in T-lymphocytes or proinflammatory cytokines and SOCS1 production in monocytes. In terms of assembly, interacts with host entry receptor NPC1. GP1 and GP2delta are part of GP1,2delta soluble complexes released by ectodomain shedding. Post-translationally, the signal peptide region modulates GP's high mannose glycosylation, thereby determining the efficiency of the interactions with DC-SIGN(R). N-glycosylated. In terms of processing, O-glycosylated in the mucin-like region. Post-translationally, palmitoylation of GP2 is not required for its function. Specific enzymatic cleavages in vivo yield mature proteins. The precursor is processed into GP1 and GP2 by host cell furin in the trans Golgi, and maybe by other host proteases, to yield the mature GP1 and GP2 proteins. The cleavage site corresponds to the furin optimal cleavage sequence [KR]-X-[KR]-R. This cleavage does not seem to be required for function. After the internalization of the virus into cell endosomes, GP1 C-terminus is removed by the endosomal proteases cathepsin B, cathepsin L, or both, leaving a 19-kDa N-terminal fragment which is further digested by cathepsin B. Proteolytic processing of GP1,2 by host ADAM17 can remove the transmembrane anchor of GP2 and leads to shedding of complexes consisting in GP1 and truncated GP2 (GP1,2delta).

Its subcellular location is the virion membrane. It is found in the host cell membrane. The protein localises to the secreted. Its function is as follows. Trimeric GP1,2 complexes form the virion surface spikes and mediate the viral entry processes, with GP1 acting as the receptor-binding subunit and GP2 as the membrane fusion subunit. At later times of infection, down-regulates the expression of various host cell surface molecules that are essential for immune surveillance and cell adhesion. Down-modulates several integrins including ITGA1, ITGA2, ITGA3, ITGA4, ITGA5, ITGA6, ITGAV and ITGB1. This decrease in cell adhesion molecules may lead to cell detachment, contributing to the disruption of blood vessel integrity and hemorrhages developed during infection (cytotoxicity). Interacts with host TLR4 and thereby stimulates the differentiation and activation of monocytes leading to bystander death of T-lymphocytes. Down-regulates as well the function of host natural killer cells. Counteracts the antiviral effect of host BST2/tetherin that restricts release of progeny virions from infected cells. However, cooperates with VP40 and host BST2 to activate canonical NF-kappa-B pathway in a manner dependent on neddylation. In terms of biological role, functions as a decoy for anti-GP1,2 antibodies thereby contributing to viral immune evasion. Interacts and activates host macrophages and dendritic cells inducing up-regulation of cytokine transcription. This effect is mediated throught activation of host TLR4. Functionally, responsible for binding to the receptor(s) on target cells. Interacts with CD209/DC-SIGN and CLEC4M/DC-SIGNR which act as cofactors for virus entry into dendritic cells (DCs) and endothelial cells. Binding to the macrophage specific lectin CLEC10A also seems to enhance virus infectivity. Interaction with FOLR1/folate receptor alpha may be a cofactor for virus entry in some cell types, although results are contradictory. Members of the Tyro3 receptor tyrosine kinase family also seem to be cell entry factors in filovirus infection. Once attached, the virions are internalized through clathrin-dependent endocytosis and/or macropinocytosis. After internalization of the virus into the endosomes of the host cell, proteolysis of GP1 by two cysteine proteases, CTSB/cathepsin B and CTSL/cathepsin L removes the glycan cap and allows GP1 binding to the host entry receptor NPC1. NPC1-binding, Ca(2+) and acidic pH induce a conformational change of GP2, which unmasks its fusion peptide and permit membranes fusion. Acts as a class I viral fusion protein. Under the current model, the protein has at least 3 conformational states: pre-fusion native state, pre-hairpin intermediate state, and post-fusion hairpin state. During viral and target cell membrane fusion, the coiled coil regions (heptad repeats) assume a trimer-of-hairpins structure, positioning the fusion peptide in close proximity to the C-terminal region of the ectodomain. The formation of this structure appears to drive apposition and subsequent fusion of viral and target cell membranes. Responsible for penetration of the virus into the cell cytoplasm by mediating the fusion of the membrane of the endocytosed virus particle with the endosomal membrane. Low pH in endosomes induces an irreversible conformational change in GP2, releasing the fusion hydrophobic peptide. The polypeptide is Envelope glycoprotein (GP) (Sudan ebolavirus (strain Maleo-79) (SEBOV)).